Reading from the N-terminus, the 149-residue chain is Cytochrome c-type biogenesis protein CcmE (149 aa).

At 1-7 (MKKRHQR) the chain is on the cytoplasmic side. Residues 8–28 (LFLVLGVVAGVSVATALVLNA) traverse the membrane as a helical; Signal-anchor for type II membrane protein segment. The Periplasmic portion of the chain corresponds to 29–149 (FRDNMTFFIT…EHSVDEVGDY (121 aa)). His123 and Tyr127 together coordinate heme.

The protein belongs to the CcmE/CycJ family.

Its subcellular location is the cell inner membrane. Its function is as follows. Heme chaperone required for the biogenesis of c-type cytochromes. Transiently binds heme delivered by CcmC and transfers the heme to apo-cytochromes in a process facilitated by CcmF and CcmH. In Halorhodospira halophila (strain DSM 244 / SL1) (Ectothiorhodospira halophila (strain DSM 244 / SL1)), this protein is Cytochrome c-type biogenesis protein CcmE.